The primary structure comprises 112 residues: Large ribosomal subunit protein uL22 (112 aa).

This sequence belongs to the universal ribosomal protein uL22 family. As to quaternary structure, part of the 50S ribosomal subunit.

This protein binds specifically to 23S rRNA; its binding is stimulated by other ribosomal proteins, e.g. L4, L17, and L20. It is important during the early stages of 50S assembly. It makes multiple contacts with different domains of the 23S rRNA in the assembled 50S subunit and ribosome. Functionally, the globular domain of the protein is located near the polypeptide exit tunnel on the outside of the subunit, while an extended beta-hairpin is found that lines the wall of the exit tunnel in the center of the 70S ribosome. The sequence is that of Large ribosomal subunit protein uL22 from Finegoldia magna (strain ATCC 29328 / DSM 20472 / WAL 2508) (Peptostreptococcus magnus).